Consider the following 176-residue polypeptide: Corrinoid adenosyltransferase (176 aa).

ATP is bound by residues 6–14, Lys-24, 131–136, and Asn-155; these read TRTGDNGTT and RRLERI.

It belongs to the Cob(I)alamin adenosyltransferase family.

It is found in the cytoplasm. It carries out the reaction 2 cob(II)yrinate a,c diamide + reduced [electron-transfer flavoprotein] + 2 ATP = 2 adenosylcob(III)yrinate a,c-diamide + 2 triphosphate + oxidized [electron-transfer flavoprotein] + 3 H(+). The catalysed reaction is 2 cob(II)alamin + reduced [electron-transfer flavoprotein] + 2 ATP = 2 adenosylcob(III)alamin + 2 triphosphate + oxidized [electron-transfer flavoprotein] + 3 H(+). It functions in the pathway cofactor biosynthesis; adenosylcobalamin biosynthesis; adenosylcobalamin from cob(II)yrinate a,c-diamide: step 2/7. The sequence is that of Corrinoid adenosyltransferase from Citrobacter freundii.